Consider the following 448-residue polypeptide: 26S proteasome regulatory subunit 4 homolog (448 aa).

Positions 1–10 are enriched in polar residues; that stretch reads MGQAQSGNFS. The interval 1 to 58 is disordered; sequence MGQAQSGNFSNFGDGANGDNKKDQKKDKPKYEPPVPTRTGRRKKKAQSGPDASAKLPT. Residues 19-31 are compositionally biased toward basic and acidic residues; the sequence is DNKKDQKKDKPKY. 232 to 239 serves as a coordination point for ATP; the sequence is GAPGTGKT.

Belongs to the AAA ATPase family.

The protein localises to the cytoplasm. It localises to the nucleus. Its function is as follows. The 26S proteasome is involved in the ATP-dependent degradation of ubiquitinated proteins. The regulatory (or ATPase) complex confers ATP dependency and substrate specificity to the 26S complex. The protein is 26S proteasome regulatory subunit 4 homolog (mts2) of Schizosaccharomyces pombe (strain 972 / ATCC 24843) (Fission yeast).